The sequence spans 339 residues: Phytoene synthase (339 aa).

Belongs to the phytoene/squalene synthase family. The cofactor is ATP. It depends on Mn(2+) as a cofactor. Requires Mg(2+) as cofactor.

It functions in the pathway carotenoid biosynthesis; phytoene biosynthesis. Involved in the biosynthesis of carotenoids. Catalyzes the condensation of two molecules of geranylgeranyl diphosphate (GGPP) to give prephytoene diphosphate (PPPP) and the subsequent rearrangement of the cyclopropylcarbinyl intermediate to yield phytoene. This chain is Phytoene synthase (crtB), found in Rhodobacter capsulatus (strain ATCC BAA-309 / NBRC 16581 / SB1003).